Reading from the N-terminus, the 298-residue chain is Bifunctional protein FolD (298 aa).

NADP(+) contacts are provided by residues glycine 165 to serine 167, serine 190, and isoleucine 231.

It belongs to the tetrahydrofolate dehydrogenase/cyclohydrolase family. Homodimer.

The enzyme catalyses (6R)-5,10-methylene-5,6,7,8-tetrahydrofolate + NADP(+) = (6R)-5,10-methenyltetrahydrofolate + NADPH. The catalysed reaction is (6R)-5,10-methenyltetrahydrofolate + H2O = (6R)-10-formyltetrahydrofolate + H(+). The protein operates within one-carbon metabolism; tetrahydrofolate interconversion. Functionally, catalyzes the oxidation of 5,10-methylenetetrahydrofolate to 5,10-methenyltetrahydrofolate and then the hydrolysis of 5,10-methenyltetrahydrofolate to 10-formyltetrahydrofolate. The polypeptide is Bifunctional protein FolD (Prochlorococcus marinus (strain AS9601)).